The chain runs to 950 residues: METGGLPLELWRMILAYLHLPDLGRCSLVCRAWYELILSLDSTRWRQLCLGCTECRHPNWPNQPDVEPESWREAFKQHYLASKTWTKNALDLESSICFSLFRRKKERRTLSVGPGHEFDSLGSALAMASLYDRIVLFPGVYEEQGEIILKVPVEIVGQGKLGEVALLASIDQHCSTTRVCNLVFMPAWFSPIMYKTTSGHIQFDNCNFENGHIQVHGPGTCQVKFCTFKNTHVFLHNVPLCMLENCEFVGSENNCVTVEGHPSADKNWAYKYLLGLIKSSPIFLPAEDHDFLMSLDLESRDQAWSPRTCDIVIEGSQSPTSPVCSSPKPGSKEAEVGSDGERVAQTPDSSDGGLSPSGEDEDDEQLTYRLSYQVQGPRPVLGGSFLGPPLPGASIQLPSCLVLNSLHQELQKDKEAMALASSVQGCLIRKCLFRDGKGGVFVCSYGRAKMEGNVFRNLTYAVRCIHNSKIVMLRNDIYRCRASGIFLRLEGGGLIAGNNIYHNAEAGVDIRKKSNPLILCNQIHHGLRSGIVVLGNGKGVIRNNQIFSNKEAGIYILYHGNPIVSGNHIFKGRAAGIAVNENGKGLITENVIRENQWGGVDIRRGGVPILRSNLICFGYSDGVVVGDEGKGLIEGNTIYANKGCGVWMMSSSLPHVTSNHVSYNGLYGVAVFSQKDGEFPGGHGAQENFSEDGDAILWEAELEKEDDPLRRPITVALVESNSINHNGASGIFVQSSEALQVVANVIHANGDRGITIVQSSQLTRVANNSISCNRQSGVKVEFQCKVELRGNGIYDNRGHGIITKGDGTAVVENDIIGNRGSGLQLLPRSDTKVLKNRIHSFRAYGIAVRGRVKALVQENIIFQGKTNKTIFQQITNNRECIMQNNKFLVFKKKSDTWRLVNPPARPHLENSLRGSSAAHSGHKVTAMATRITARVEGGYHSNRSIFCTIL.

One can recognise an F-box domain in the interval 1–48 (METGGLPLELWRMILAYLHLPDLGRCSLVCRAWYELILSLDSTRWRQL). PbH1 repeat units lie at residues 198 to 217 (SGHIQFDNCNFENGHIQVHG) and 238 to 260 (VPLCMLENCEFVGSENNCVTVEG). The segment at 313–364 (IEGSQSPTSPVCSSPKPGSKEAEVGSDGERVAQTPDSSDGGLSPSGEDEDDE) is disordered. The span at 315–324 (GSQSPTSPVC) shows a compositional bias: polar residues. Residues S321 and S326 each carry the phosphoserine modification. Over residues 330-342 (GSKEAEVGSDGER) the composition is skewed to basic and acidic residues. A compositionally biased stretch (low complexity) spans 347–357 (PDSSDGGLSPS). 15 PbH1 repeats span residues 423–444 (VQGCLIRKCLFRDGKGGVFVCS), 467–489 (NSKIVMLRNDIYRCRASGIFLRL), 490–512 (EGGGLIAGNNIYHNAEAGVDIRK), 513–535 (KSNPLILCNQIHHGLRSGIVVLG), 536–558 (NGKGVIRNNQIFSNKEAGIYILY), 559–581 (HGNPIVSGNHIFKGRAAGIAVNE), 582–604 (NGKGLITENVIRENQWGGVDIRR), 605–627 (GGVPILRSNLICFGYSDGVVVGD), 628–650 (EGKGLIEGNTIYANKGCGVWMMS), 651–673 (SSLPHVTSNHVSYNGLYGVAVFS), 713–735 (ITVALVESNSINHNGASGIFVQS), 736–758 (SEALQVVANVIHANGDRGITIVQ), 760–782 (SQLTRVANNSISCNRQSGVKVEF), 783–805 (QCKVELRGNGIYDNRGHGIITKG), and 828–850 (RSDTKVLKNRIHSFRAYGIAVRG).

Component of the SCF(FBXO10) complex consisting of CUL1, SKP1 and FBXO10. Interacts with BCL2. Interacts with PRDM1. In terms of tissue distribution, particularly highly expressed in B-cells.

The protein localises to the cytoplasm. It functions in the pathway protein modification; protein ubiquitination. Substrate-recognition component of the SCF (SKP1-CUL1-F-box protein)-type E3 ubiquitin ligase complex. Mediates the ubiquitination and degradation of BCL2, an antiapoptotic protein, thereby playing a role in apoptosis by controlling the stability of BCL2. Targets also the receptor for advanced glycation end products RAGE for ubiquitination and subsequent lysosomal degradation. Directly controls HGAL/GCSAM ubiquitination and degradation and thereby decreases BCR signaling. In Mus musculus (Mouse), this protein is F-box only protein 10 (Fbxo10).